Consider the following 268-residue polypeptide: Type III pantothenate kinase (268 aa).

Residue 6–13 (DVGNTNIV) participates in ATP binding. Substrate is bound by residues Tyr100 and 107–110 (GADR). Asp109 (proton acceptor) is an active-site residue. Asp129 is a binding site for K(+). Thr132 is a binding site for ATP. A substrate-binding site is contributed by Thr184.

This sequence belongs to the type III pantothenate kinase family. In terms of assembly, homodimer. Requires NH4(+) as cofactor. K(+) serves as cofactor.

The protein resides in the cytoplasm. It catalyses the reaction (R)-pantothenate + ATP = (R)-4'-phosphopantothenate + ADP + H(+). It participates in cofactor biosynthesis; coenzyme A biosynthesis; CoA from (R)-pantothenate: step 1/5. Functionally, catalyzes the phosphorylation of pantothenate (Pan), the first step in CoA biosynthesis. The protein is Type III pantothenate kinase of Alkaliphilus metalliredigens (strain QYMF).